The chain runs to 712 residues: Saccharolysin (712 aa).

Position 73 is a phosphoserine (serine 73). Histidine 501 contacts Zn(2+). Glutamate 502 is a catalytic residue. Positions 505 and 508 each coordinate Zn(2+).

The protein belongs to the peptidase M3 family. The cofactor is Zn(2+).

It localises to the cytoplasm. It catalyses the reaction Cleavage of Pro-|-Phe and Ala-|-Ala bonds.. Could be involved in late stage of protein degradation. In Saccharomyces cerevisiae (strain ATCC 204508 / S288c) (Baker's yeast), this protein is Saccharolysin (PRD1).